A 103-amino-acid chain; its full sequence is Urease subunit beta (103 aa).

Belongs to the urease beta subunit family. Heterotrimer of UreA (gamma), UreB (beta) and UreC (alpha) subunits. Three heterotrimers associate to form the active enzyme.

It localises to the cytoplasm. It catalyses the reaction urea + 2 H2O + H(+) = hydrogencarbonate + 2 NH4(+). The protein operates within nitrogen metabolism; urea degradation; CO(2) and NH(3) from urea (urease route): step 1/1. The polypeptide is Urease subunit beta (Mycobacterium marinum (strain ATCC BAA-535 / M)).